The chain runs to 85 residues: SCOCO-like protein 1 (85 aa).

Polar residues predominate over residues 1–20; it reads MSAENISTGSPTGKQPSSEV. The segment at 1–34 is disordered; sequence MSAENISTGSPTGKQPSSEVNLGEREAGTKNERM. An N-acetylserine modification is found at Ser-2. Ser-10 carries the phosphoserine modification. Basic and acidic residues predominate over residues 22 to 34; the sequence is LGEREAGTKNERM.

It belongs to the SLO1 family. As to quaternary structure, interacts with ARL3.

The polypeptide is SCOCO-like protein 1 (SLO1) (Saccharomyces cerevisiae (strain ATCC 204508 / S288c) (Baker's yeast)).